A 238-amino-acid chain; its full sequence is B-box zinc finger protein 25 (238 aa).

Positions 5, 8, 28, 33, 57, 60, 80, and 85 each coordinate Zn(2+). A B box-type 1; atypical zinc finger spans residues 5 to 47 (CDVCEKAPATLICCADEAALCAKCDVEVHAANKLASKHQRLFL). The B box-type 2; atypical zinc-finger motif lies at 57-99 (CDICLEKAAFIFCVEDRALLCRDCDEATHAPNTRSANHQRFLA). Residues 115–139 (VEKNHFDPSNQQSLSKPPTQQPAAP) form a disordered region. Residues 121–137 (DPSNQQSLSKPPTQQPA) show a composition bias toward polar residues. Positions 226–238 (DDEEEHFLVPDLG) are interaction with COP1.

Interacts with COP1 WD40 domain. Interacts with HY5 and HYH. COP1-mediated ubiquitination and subsequent proteasomal degradation of BBX25/STH occurs in the dark.

It is found in the nucleus. Functionally, acts as a negative regulator of seedling photomorphogenesis. BBX25/STH and BBX24/STO function as transcriptional corepressors of HY5 activity, leading to the down-regulation of BBX22 expression. BBX25/STH acts additively with BBX24/STO during de-etiolation and the hypocotyl shade avoidance response. In Arabidopsis thaliana (Mouse-ear cress), this protein is B-box zinc finger protein 25.